A 175-amino-acid chain; its full sequence is Adenine phosphoribosyltransferase (175 aa).

Belongs to the purine/pyrimidine phosphoribosyltransferase family. Homodimer.

The protein localises to the cytoplasm. The catalysed reaction is AMP + diphosphate = 5-phospho-alpha-D-ribose 1-diphosphate + adenine. It functions in the pathway purine metabolism; AMP biosynthesis via salvage pathway; AMP from adenine: step 1/1. In terms of biological role, catalyzes a salvage reaction resulting in the formation of AMP, that is energically less costly than de novo synthesis. In Lacticaseibacillus paracasei (strain ATCC 334 / BCRC 17002 / CCUG 31169 / CIP 107868 / KCTC 3260 / NRRL B-441) (Lactobacillus paracasei), this protein is Adenine phosphoribosyltransferase.